The primary structure comprises 554 residues: Malate synthase 1 (554 aa).

The Proton acceptor role is filled by arginine 177. Aspartate 457 serves as the catalytic Proton donor. An SKL peroxisome targeting motif motif is present at residues 552–554 (SKL).

This sequence belongs to the malate synthase family. Interacts with PEX9.

The protein localises to the peroxisome matrix. It catalyses the reaction glyoxylate + acetyl-CoA + H2O = (S)-malate + CoA + H(+). It participates in carbohydrate metabolism; glyoxylate cycle; (S)-malate from isocitrate: step 2/2. Its function is as follows. Malate synthase which takes part in the glyoxylate cycle. MLS1 activity is essential for cells to grow on oleic acid as a sole carbon source. Two steps of the glyoxylate cycle take place in the cytosol, the splitting of isocitrate into succinate and glyoxylate, and the dehydrogenation of malate to oxaloacetate. However, the formation of malate from glyoxylate and acetyl-CoA undertaken MLS1, occurs in the peroxisomes when cells are grown on oleic acid. The source of acetyl-CoA being either peroxisomal when breaking down fatty acids, or cytosolic when extra-cellular two-carbon substrates are used, therefore, although not strictly essential, the peroxisomal localization of MLS1 appears to be advantageous for cells growing on oleic acid, in that acetyl-CoA production and utilization are thereby intimately compartmentalized together to increase efficiency. This is Malate synthase 1 from Saccharomyces cerevisiae (strain YJM789) (Baker's yeast).